We begin with the raw amino-acid sequence, 505 residues long: AMP phosphorylase (505 aa).

AMP is bound by residues Gly-170, 196 to 201 (SRAITS), and Thr-205. Asp-258 serves as the catalytic Proton donor. AMP is bound by residues Ser-266 and Lys-290.

The protein belongs to the thymidine/pyrimidine-nucleoside phosphorylase family. Type 2 subfamily.

It carries out the reaction AMP + phosphate = alpha-D-ribose 1,5-bisphosphate + adenine. The catalysed reaction is CMP + phosphate = cytosine + alpha-D-ribose 1,5-bisphosphate. It catalyses the reaction UMP + phosphate = alpha-D-ribose 1,5-bisphosphate + uracil. Catalyzes the conversion of AMP and phosphate to adenine and ribose 1,5-bisphosphate (R15P). Exhibits phosphorylase activity toward CMP and UMP in addition to AMP. Functions in an archaeal AMP degradation pathway, together with R15P isomerase and RubisCO. This chain is AMP phosphorylase, found in Methanococcus maripaludis (strain DSM 14266 / JCM 13030 / NBRC 101832 / S2 / LL).